The following is a 507-amino-acid chain: Histone-lysine N-methyltransferase set-18 (507 aa).

Residues Cys-49, Cys-52, Cys-65, Cys-68, Cys-74, Cys-78, His-86, and Cys-90 each coordinate Zn(2+). The MYND-type zinc-finger motif lies at 49-90 (CANCLRGPAPGEKLLRCGGCNFSMYCSKECQATAWLVHKPEC).

Belongs to the class V-like SAM-binding methyltransferase superfamily. Histone-lysine methyltransferase family. As to expression, expressed in pharyngeal and body wall muscles.

It catalyses the reaction L-lysyl(36)-[histone H3] + 2 S-adenosyl-L-methionine = N(6),N(6)-dimethyl-L-lysyl(36)-[histone H3] + 2 S-adenosyl-L-homocysteine + 2 H(+). In terms of biological role, histone methyltransferase. Specifically methylates 'Lys-36' of histone H3, inducing di-methylation. Plays a role in modulating lifespan and oxidative stress resistance, in a manner dependent upon daf-16/Forkhead box protein O and the Insulin/IGF-1-like signaling (IIS) mediated pathway. Represses transcription of daf-16 isoform a, perhaps by methylating histone H3 at the daf-16 promoter, which in turn leads to recruitment of histone deacetylases and thus modulation of expression. The chain is Histone-lysine N-methyltransferase set-18 from Caenorhabditis elegans.